The chain runs to 188 residues: Peptide deformylase (188 aa).

The interval 70–90 is disordered; the sequence is AEPVACDHDGHHHHHQPTKKE. Residues Cys113 and His155 each contribute to the Fe cation site. Residue Glu156 is part of the active site. Residue His159 coordinates Fe cation.

The protein belongs to the polypeptide deformylase family. Requires Fe(2+) as cofactor.

It catalyses the reaction N-terminal N-formyl-L-methionyl-[peptide] + H2O = N-terminal L-methionyl-[peptide] + formate. Its function is as follows. Removes the formyl group from the N-terminal Met of newly synthesized proteins. Requires at least a dipeptide for an efficient rate of reaction. N-terminal L-methionine is a prerequisite for activity but the enzyme has broad specificity at other positions. The chain is Peptide deformylase from Novosphingobium aromaticivorans (strain ATCC 700278 / DSM 12444 / CCUG 56034 / CIP 105152 / NBRC 16084 / F199).